The following is a 370-amino-acid chain: Ferrochelatase (370 aa).

Residues His-210 and Glu-291 each contribute to the Fe cation site.

This sequence belongs to the ferrochelatase family.

It is found in the cytoplasm. It carries out the reaction heme b + 2 H(+) = protoporphyrin IX + Fe(2+). It functions in the pathway porphyrin-containing compound metabolism; protoheme biosynthesis; protoheme from protoporphyrin-IX: step 1/1. Catalyzes the ferrous insertion into protoporphyrin IX. This chain is Ferrochelatase, found in Marinobacter nauticus (strain ATCC 700491 / DSM 11845 / VT8) (Marinobacter aquaeolei).